The primary structure comprises 642 residues: Fimbrin (642 aa).

2 consecutive EF-hand domains span residues 16-50 (EDLF…KDGD) and 51-86 (ATYD…LRES). Ca(2+) contacts are provided by Asp29, Asp31, Trp35, Asp66, Ser68, Arg70, and Asp75. Actin-binding regions lie at residues 125–394 (IVAG…GLEP) and 395–642 (IQEE…TLNK). Calponin-homology (CH) domains lie at 139 to 259 (EEER…RRGL), 287 to 390 (LPPE…NTHP), 411 to 521 (EREA…RRNI), and 534 to 642 (DMSD…TLNK).

Binds to actin, and functionally associates with actin structures involved in the development and maintenance of cell polarity. In Saccharomyces cerevisiae (strain ATCC 204508 / S288c) (Baker's yeast), this protein is Fimbrin (SAC6).